A 43-amino-acid polypeptide reads, in one-letter code: Protein PsbN (43 aa).

Residues 7–27 (LSIAIGSILLVITGFAIYTAF) form a helical membrane-spanning segment.

Belongs to the PsbN family.

Its subcellular location is the cellular thylakoid membrane. Functionally, may play a role in photosystem I and II biogenesis. This Crocosphaera subtropica (strain ATCC 51142 / BH68) (Cyanothece sp. (strain ATCC 51142)) protein is Protein PsbN.